A 902-amino-acid polypeptide reads, in one-letter code: MAYNRLDDDYFDNRRPMNNRPPPHRTPSPGHPLQHGYQLDDAPYGRPGLNSASNLDIPMGPGRHTPSDQLQLHTAHSMANMSEPGYQQQPGGYRDEYSVNPEQHHDAYYNPTYTPTPNEAQTPYGEPGYEHDGRPLLPQQDSYGQYSDNPQQQQQQQGGLKRWKTVKRVPLYMGNLVLDCPVPPKLLNQFPHGERDEFTHMRYSAATCDPNDFYDEKFTLRQRLFSKPRETELFIVVTMYNEDEVLFARTMIGVFKNIEYMCKRPESKTWGKEAWKKIVVCIVSDGRAKINPRTRALLAGLGVYQEGIARQNVDDKPTTAHIYEYTTQIGMALKNDVVQLLPRQQPVQLLFCLKENNQKKINSHRWFFSAFGRVLNPNICVLLDAGTKPGGNSIYHLWKAFDLEPMCAGACGEIKAMLGTGGKNLFNPLVAAQNFEYKMSNILDKPLESAFGFISVLPGAFSAYRYIALQNDKNGQGPLEKYFAGEKLHGAGAGIFTANMYLAEDRILCFELVTKRNCHWILQYVKSATGETDVPDTATELILQRRRWLNGSFFAAIYAIAHFYQFFRSDHSFFRKIAFFIEFTFNTVNMIFAWFAIGNFFLVFKILTTSLGDETLLGTTGKILGVCFEWLYGVSLITCFVLAMGNRPAGSGPYYLAMIYFWAIIFCYLLFAAVFISVKAIMADAQRGLSVPELLKDQVVVTLILSIMSTYGIWLVASLLMFDPWHMFTSLVQYMLLSPTFTNVLNVYAFCNTHDISWGTKGDDKPDKLPSVSTKDGAGKADLPDEADLNTMYERELAVFAQKHVEEKKALTPSQLDEKQLDYYRGVRTVVVLLWMVTNFGLAAVVLSTAGLDRITPNTNAETKEQRATIYMAVVLYSVAALSGFKFIGAMWFLVVRMFRGV.

A compositionally biased stretch (basic and acidic residues) spans 1-15; sequence MAYNRLDDDYFDNRR. The interval 1–68 is disordered; it reads MAYNRLDDDY…MGPGRHTPSD (68 aa). The segment covering 19-30 has biased composition (pro residues); sequence NRPPPHRTPSPG. N-linked (GlcNAc...) asparagine glycosylation occurs at Asn80. The segment at 104–161 is disordered; that stretch reads HHDAYYNPTYTPTPNEAQTPYGEPGYEHDGRPLLPQQDSYGQYSDNPQQQQQQQGGLK. 2 stretches are compositionally biased toward polar residues: residues 111 to 121 and 139 to 150; these read PTYTPTPNEAQ and QQDSYGQYSDNP. Helical transmembrane passes span 449-469, 547-567, 577-597, 623-643, 656-676, 699-719, 731-751, 830-850, and 874-894; these read SAFGFISVLPGAFSAYRYIAL, RWLNGSFFAAIYAIAHFYQFF, IAFFIEFTFNTVNMIFAWFAI, ILGVCFEWLYGVSLITCFVLA, LAMIYFWAIIFCYLLFAAVFI, VVVTLILSIMSTYGIWLVASL, LVQYMLLSPTFTNVLNVYAFC, VVVLLWMVTNFGLAAVVLSTA, and VVLYSVAALSGFKFIGAMWFL.

The protein belongs to the chitin synthase family. Class II subfamily.

Its subcellular location is the cell membrane. It catalyses the reaction [(1-&gt;4)-N-acetyl-beta-D-glucosaminyl](n) + UDP-N-acetyl-alpha-D-glucosamine = [(1-&gt;4)-N-acetyl-beta-D-glucosaminyl](n+1) + UDP + H(+). Its function is as follows. Polymerizes chitin, a structural polymer of the cell wall and septum, by transferring the sugar moiety of UDP-GlcNAc to the non-reducing end of the growing chitin polymer. CHS1 and CHS3 have compensatory functions in cell wall modifications in responses to stresses. Might function as a negative regulator on expression of other CHS genes. The protein is Chitin synthase 3 of Pyricularia oryzae (strain 70-15 / ATCC MYA-4617 / FGSC 8958) (Rice blast fungus).